The chain runs to 211 residues: Phosphoribosyl-dephospho-CoA transferase (211 aa).

Active-site residues include Asp-136 and Asp-138.

The protein belongs to the MdcG family.

It carries out the reaction apo-[malonate decarboxylase ACP] + 2'-(5''-triphospho-alpha-D-ribosyl)-3'-dephospho-CoA = holo-[malonate decarboxylase ACP] + diphosphate. Its function is as follows. Transfers 2'-(5-triphosphoribosyl)-3'-dephosphocoenzyme-A to the apo-[acyl-carrier-protein] of the malonate decarboxylase to yield holo-[acyl-carrier-protein]. The chain is Phosphoribosyl-dephospho-CoA transferase from Pseudomonas syringae pv. tomato (strain ATCC BAA-871 / DC3000).